We begin with the raw amino-acid sequence, 389 residues long: Alanine racemase (389 aa).

Residue K48 is the Proton acceptor; specific for D-alanine of the active site. N6-(pyridoxal phosphate)lysine is present on K48. R144 serves as a coordination point for substrate. Residue Y281 is the Proton acceptor; specific for L-alanine of the active site. M329 is a substrate binding site.

This sequence belongs to the alanine racemase family. The cofactor is pyridoxal 5'-phosphate.

The catalysed reaction is L-alanine = D-alanine. It participates in amino-acid biosynthesis; D-alanine biosynthesis; D-alanine from L-alanine: step 1/1. Catalyzes the interconversion of L-alanine and D-alanine. May also act on other amino acids. This Leptospira interrogans serogroup Icterohaemorrhagiae serovar copenhageni (strain Fiocruz L1-130) protein is Alanine racemase (alr).